The following is a 250-amino-acid chain: Ubiquinone/menaquinone biosynthesis C-methyltransferase UbiE (250 aa).

Residues T73, D94, and 122 to 123 (DA) contribute to the S-adenosyl-L-methionine site.

The protein belongs to the class I-like SAM-binding methyltransferase superfamily. MenG/UbiE family.

It catalyses the reaction a 2-demethylmenaquinol + S-adenosyl-L-methionine = a menaquinol + S-adenosyl-L-homocysteine + H(+). The catalysed reaction is a 2-methoxy-6-(all-trans-polyprenyl)benzene-1,4-diol + S-adenosyl-L-methionine = a 5-methoxy-2-methyl-3-(all-trans-polyprenyl)benzene-1,4-diol + S-adenosyl-L-homocysteine + H(+). The protein operates within quinol/quinone metabolism; menaquinone biosynthesis; menaquinol from 1,4-dihydroxy-2-naphthoate: step 2/2. It participates in cofactor biosynthesis; ubiquinone biosynthesis. Functionally, methyltransferase required for the conversion of demethylmenaquinol (DMKH2) to menaquinol (MKH2) and the conversion of 2-polyprenyl-6-methoxy-1,4-benzoquinol (DDMQH2) to 2-polyprenyl-3-methyl-6-methoxy-1,4-benzoquinol (DMQH2). This chain is Ubiquinone/menaquinone biosynthesis C-methyltransferase UbiE, found in Coxiella burnetii (strain CbuK_Q154) (Coxiella burnetii (strain Q154)).